The following is a 71-amino-acid chain: UPF0434 protein Meso_3270 (71 aa).

It belongs to the UPF0434 family.

This chain is UPF0434 protein Meso_3270, found in Chelativorans sp. (strain BNC1).